Here is an 89-residue protein sequence, read N- to C-terminus: Small ribosomal subunit protein uS15 (89 aa).

Belongs to the universal ribosomal protein uS15 family. In terms of assembly, part of the 30S ribosomal subunit. Forms a bridge to the 50S subunit in the 70S ribosome, contacting the 23S rRNA.

Functionally, one of the primary rRNA binding proteins, it binds directly to 16S rRNA where it helps nucleate assembly of the platform of the 30S subunit by binding and bridging several RNA helices of the 16S rRNA. Its function is as follows. Forms an intersubunit bridge (bridge B4) with the 23S rRNA of the 50S subunit in the ribosome. This is Small ribosomal subunit protein uS15 from Cereibacter sphaeroides (strain ATCC 17023 / DSM 158 / JCM 6121 / CCUG 31486 / LMG 2827 / NBRC 12203 / NCIMB 8253 / ATH 2.4.1.) (Rhodobacter sphaeroides).